Here is a 786-residue protein sequence, read N- to C-terminus: Constitutive coactivator of peroxisome proliferator-activated receptor gamma (786 aa).

The tract at residues 1-561 (MGVRGLQGFV…GTPSLEVLWL (561 aa)) is mediates transactivation of PPARG. 2 disordered regions span residues 371–413 (PNQE…KLPS) and 738–786 (HWDS…WRRY). Positions 750–771 (QGYSSYRTDSTHGHSGQSWRNQ) are enriched in polar residues.

Belongs to the constitutive coactivator of PPAR-gamma family. In terms of assembly, interacts with ESR1 and RXRA. Interacts with PPARG; in a ligand-independent manner. Ubiquitously expressed (at protein level).

The protein localises to the nucleus. In terms of biological role, functions as a transactivator of PPARG and ESR1. Functions in adipogenesis through PPARG activation. The chain is Constitutive coactivator of peroxisome proliferator-activated receptor gamma (Fam120b) from Mus musculus (Mouse).